Consider the following 472-residue polypeptide: 3-isopropylmalate dehydratase large subunit (472 aa).

Residues C347, C409, and C412 each contribute to the [4Fe-4S] cluster site.

Belongs to the aconitase/IPM isomerase family. LeuC type 1 subfamily. Heterodimer of LeuC and LeuD. [4Fe-4S] cluster is required as a cofactor.

The catalysed reaction is (2R,3S)-3-isopropylmalate = (2S)-2-isopropylmalate. It participates in amino-acid biosynthesis; L-leucine biosynthesis; L-leucine from 3-methyl-2-oxobutanoate: step 2/4. Catalyzes the isomerization between 2-isopropylmalate and 3-isopropylmalate, via the formation of 2-isopropylmaleate. The protein is 3-isopropylmalate dehydratase large subunit of Salinibacter ruber (strain DSM 13855 / M31).